The primary structure comprises 204 residues: FMN-dependent NADH:quinone oxidoreductase 5 (204 aa).

Serine 10 provides a ligand contact to FMN.

This sequence belongs to the azoreductase type 1 family. As to quaternary structure, homodimer. The cofactor is FMN.

It catalyses the reaction 2 a quinone + NADH + H(+) = 2 a 1,4-benzosemiquinone + NAD(+). The enzyme catalyses N,N-dimethyl-1,4-phenylenediamine + anthranilate + 2 NAD(+) = 2-(4-dimethylaminophenyl)diazenylbenzoate + 2 NADH + 2 H(+). In terms of biological role, quinone reductase that provides resistance to thiol-specific stress caused by electrophilic quinones. Functionally, also exhibits azoreductase activity. Catalyzes the reductive cleavage of the azo bond in aromatic azo compounds to the corresponding amines. The chain is FMN-dependent NADH:quinone oxidoreductase 5 from Burkholderia lata (strain ATCC 17760 / DSM 23089 / LMG 22485 / NCIMB 9086 / R18194 / 383).